The primary structure comprises 557 residues: Formate--tetrahydrofolate ligase (557 aa).

ATP is bound at residue 65–72; it reads TPAGEGKT.

This sequence belongs to the formate--tetrahydrofolate ligase family.

The catalysed reaction is (6S)-5,6,7,8-tetrahydrofolate + formate + ATP = (6R)-10-formyltetrahydrofolate + ADP + phosphate. It participates in one-carbon metabolism; tetrahydrofolate interconversion. The protein is Formate--tetrahydrofolate ligase of Zymomonas mobilis subsp. mobilis (strain ATCC 31821 / ZM4 / CP4).